Consider the following 329-residue polypeptide: Glycerol-3-phosphate dehydrogenase [NAD(P)+] (329 aa).

NADPH-binding residues include serine 10, tryptophan 11, arginine 31, and lysine 105. Sn-glycerol 3-phosphate contacts are provided by lysine 105, glycine 134, and serine 136. Alanine 138 contributes to the NADPH binding site. Positions 189, 242, 252, 253, and 254 each coordinate sn-glycerol 3-phosphate. Lysine 189 (proton acceptor) is an active-site residue. Position 253 (arginine 253) interacts with NADPH. NADPH contacts are provided by valine 277 and glutamate 279.

Belongs to the NAD-dependent glycerol-3-phosphate dehydrogenase family.

It is found in the cytoplasm. The enzyme catalyses sn-glycerol 3-phosphate + NAD(+) = dihydroxyacetone phosphate + NADH + H(+). The catalysed reaction is sn-glycerol 3-phosphate + NADP(+) = dihydroxyacetone phosphate + NADPH + H(+). It functions in the pathway membrane lipid metabolism; glycerophospholipid metabolism. Functionally, catalyzes the reduction of the glycolytic intermediate dihydroxyacetone phosphate (DHAP) to sn-glycerol 3-phosphate (G3P), the key precursor for phospholipid synthesis. The chain is Glycerol-3-phosphate dehydrogenase [NAD(P)+] from Neisseria gonorrhoeae (strain ATCC 700825 / FA 1090).